Here is a 448-residue protein sequence, read N- to C-terminus: Phosphoglucosamine mutase (448 aa).

The active-site Phosphoserine intermediate is the Ser100. Mg(2+) contacts are provided by Ser100, Asp240, Asp242, and Asp244. At Ser100 the chain carries Phosphoserine.

This sequence belongs to the phosphohexose mutase family. It depends on Mg(2+) as a cofactor. Activated by phosphorylation.

The enzyme catalyses alpha-D-glucosamine 1-phosphate = D-glucosamine 6-phosphate. Its function is as follows. Catalyzes the conversion of glucosamine-6-phosphate to glucosamine-1-phosphate. This is Phosphoglucosamine mutase from Bacillus cereus (strain B4264).